Here is a 280-residue protein sequence, read N- to C-terminus: ESX-1 secretion-associated protein EspJ (280 aa).

At serine 70 the chain carries Phosphoserine. Composition is skewed to low complexity over residues 167–181 (QTIS…QSAQ) and 246–280 (PAQA…TTTL). Positions 167–280 (QTISQTAQQA…TPAPSTTTTL (114 aa)) are disordered.

In terms of processing, phosphorylated at Ser-70.

Its subcellular location is the secreted. Its function is as follows. Could be involved in regulation of growth and intracellular survival. The sequence is that of ESX-1 secretion-associated protein EspJ from Mycobacterium tuberculosis (strain CDC 1551 / Oshkosh).